The chain runs to 121 residues: Large ribosomal subunit protein bL12 (121 aa).

Belongs to the bacterial ribosomal protein bL12 family. In terms of assembly, homodimer. Part of the ribosomal stalk of the 50S ribosomal subunit. Forms a multimeric L10(L12)X complex, where L10 forms an elongated spine to which 2 to 4 L12 dimers bind in a sequential fashion. Binds GTP-bound translation factors.

Functionally, forms part of the ribosomal stalk which helps the ribosome interact with GTP-bound translation factors. Is thus essential for accurate translation. In Bacillus pumilus (strain SAFR-032), this protein is Large ribosomal subunit protein bL12.